A 298-amino-acid polypeptide reads, in one-letter code: Possible hemolysin C (298 aa).

CBS domains lie at 80 to 141 and 145 to 202; these read MVPR…QNGC and LIRK…IDDE.

This sequence belongs to the UPF0053 family. Hemolysin C subfamily.

In Rickettsia canadensis (strain McKiel), this protein is Possible hemolysin C (tlyC).